The primary structure comprises 217 residues: 3,4-dihydroxy-2-butanone 4-phosphate synthase (217 aa).

D-ribulose 5-phosphate-binding positions include arginine 37–glutamate 38, aspartate 42, arginine 150–threonine 154, and glutamate 174. Glutamate 38 contributes to the Mg(2+) binding site. Position 153 (histidine 153) interacts with Mg(2+).

It belongs to the DHBP synthase family. As to quaternary structure, homodimer. Requires Mg(2+) as cofactor. Mn(2+) serves as cofactor.

The enzyme catalyses D-ribulose 5-phosphate = (2S)-2-hydroxy-3-oxobutyl phosphate + formate + H(+). It participates in cofactor biosynthesis; riboflavin biosynthesis; 2-hydroxy-3-oxobutyl phosphate from D-ribulose 5-phosphate: step 1/1. Catalyzes the conversion of D-ribulose 5-phosphate to formate and 3,4-dihydroxy-2-butanone 4-phosphate. This chain is 3,4-dihydroxy-2-butanone 4-phosphate synthase, found in Shewanella oneidensis (strain ATCC 700550 / JCM 31522 / CIP 106686 / LMG 19005 / NCIMB 14063 / MR-1).